A 151-amino-acid chain; its full sequence is Cytochrome c oxidase subunit 5B, mitochondrial (151 aa).

The transit peptide at 1–17 directs the protein to the mitochondrion; sequence MLRTSLTKGARLTGTRF. The Mitochondrial matrix segment spans residues 18-85; that stretch reads VQTKALSKAT…EWGPRRPVHG (68 aa). A helical transmembrane segment spans residues 86–108; the sequence is KGDVAFITKGVFLGLGISFGLFG. Over 109-151 the chain is Mitochondrial intermembrane; sequence LVRLLANPETPKTMNREWQLKSDEYLKSKNANPWGGYSQVQSK.

It belongs to the cytochrome c oxidase IV family. Component of the cytochrome c oxidase (complex IV, CIV), a multisubunit enzyme composed of 12 subunits. The complex is composed of a catalytic core of 3 subunits COX1, COX2 and COX3, encoded in the mitochondrial DNA, and 9 supernumerary subunits COX4, COX5A (or COX5B), COX6, COX7, COX8, COX9, COX12, COX13 and COX26, which are encoded in the nuclear genome. COX5A is the predominant subunit V during aerobic/normoxic growth, it gets replaced by COX5B under anaerobic/hypoxic conditions. The complex exists as a monomer or a dimer and forms supercomplexes (SCs) in the inner mitochondrial membrane with a dimer of ubiquinol-cytochrome c oxidoreductase (cytochrome b-c1 complex, complex III, CIII), resulting in 2 different assemblies (supercomplexes III(2)IV and III(2)IV(2)).

It is found in the mitochondrion inner membrane. Its pathway is energy metabolism; oxidative phosphorylation. Its function is as follows. Component of the cytochrome c oxidase, the last enzyme in the mitochondrial electron transport chain which drives oxidative phosphorylation. The respiratory chain contains 3 multisubunit complexes succinate dehydrogenase (complex II, CII), ubiquinol-cytochrome c oxidoreductase (cytochrome b-c1 complex, complex III, CIII) and cytochrome c oxidase (complex IV, CIV), that cooperate to transfer electrons derived from NADH and succinate to molecular oxygen, creating an electrochemical gradient over the inner membrane that drives transmembrane transport and the ATP synthase. Cytochrome c oxidase is the component of the respiratory chain that catalyzes the reduction of oxygen to water. Electrons originating from reduced cytochrome c in the intermembrane space (IMS) are transferred via the dinuclear copper A center (CU(A)) of COX2 and heme A of COX1 to the active site in COX1, a binuclear center (BNC) formed by heme A3 and copper B (CU(B)). The BNC reduces molecular oxygen to 2 water molecules using 4 electrons from cytochrome c in the IMS and 4 protons from the mitochondrial matrix. The polypeptide is Cytochrome c oxidase subunit 5B, mitochondrial (COX5B) (Saccharomyces cerevisiae (strain ATCC 204508 / S288c) (Baker's yeast)).